A 265-amino-acid chain; its full sequence is GTP cyclohydrolase FolE2 (265 aa).

The protein belongs to the GTP cyclohydrolase IV family.

The enzyme catalyses GTP + H2O = 7,8-dihydroneopterin 3'-triphosphate + formate + H(+). The protein operates within cofactor biosynthesis; 7,8-dihydroneopterin triphosphate biosynthesis; 7,8-dihydroneopterin triphosphate from GTP: step 1/1. Functionally, converts GTP to 7,8-dihydroneopterin triphosphate. The protein is GTP cyclohydrolase FolE2 of Bordetella petrii (strain ATCC BAA-461 / DSM 12804 / CCUG 43448).